A 568-amino-acid chain; its full sequence is Protein phosphatase 1 regulatory inhibitor subunit 16B (568 aa).

A coiled-coil region spans residues 15 to 55; the sequence is EKVPTLERLRAAQKRRAQQLKKWAQYEQDLLHRKRKHERKR. S69 carries the phosphoserine modification. ANK repeat units lie at residues 100–129, 133–162, 228–257, and 261–290; these read DGLT…NVNA, ELWT…DLLA, QGAT…RVDV, and DGWE…SLSA. 3 positions are modified to phosphoserine: S333, S337, and S350. The tract at residues 373–403 is disordered; sequence SAAEDQRTSTYNGDIRETRTDQENKDPNPRL. Over residues 386–403 the composition is skewed to basic and acidic residues; sequence DIRETRTDQENKDPNPRL. The residue at position 477 (S477) is a Phosphoserine. Low complexity predominate over residues 505-517; sequence SSVARSGESSSEG. The segment at 505 to 527 is disordered; it reads SSVARSGESSSEGKAPLIGGRTS. The stretch at 531 to 560 is one ANK 5 repeat; the sequence is SNGTSVYYTVTSGDPPLLKFKAPMEEMEEK. The S-palmitoyl cysteine moiety is linked to residue C564. C565 bears the Cysteine methyl ester mark. C565 carries S-farnesyl cysteine lipidation. Residues 566–568 constitute a propeptide, removed in mature form; the sequence is RIS.

As to quaternary structure, interacts with PPP1CA, PPP1CB and MSN. Interacts (via its fourth ankyrin repeat) with the mature dimeric form of RPSA/LAMR1. Interacts with EEF1A1. Interacts with PTEN. Interacts with ECE1. Phosphorylated by PKA and, after PKA priming, by GSK3B. Phosphorylation by GSK3B reduces its association with PP1C and enhances PP1C activity. Dephosphorylation by its associated PP1C results in enhanced association with PP1C, but reduced PP1C activity.

It is found in the cell membrane. Its subcellular location is the nucleus. The protein localises to the cell projection. In terms of biological role, regulator of protein phosphatase 1 (PP1) that acts as a positive regulator of pulmonary endothelial cell (EC) barrier function. Protects the endothelial barrier from lipopolysaccharide (LPS)-induced vascular leakage. Involved in the regulation of the PI3K/AKT signaling pathway. Involved in the regulation of angiogenesis and endothelial cell proliferation through the control of ECE1 dephosphorylation, trafficking and activity. Involved in the regulation of endothelial cell filopodia extension. May be a downstream target for TGF-beta1 signaling cascade in endothelial cells. Involved in PKA-mediated moesin dephosphorylation which is important in EC barrier protection against thrombin stimulation. Promotes the interaction of PPP1CA with RPSA/LAMR1 and in turn facilitates the dephosphorylation of RPSA/LAMR1. Involved in the dephosphorylation of EEF1A1. The chain is Protein phosphatase 1 regulatory inhibitor subunit 16B (Ppp1r16b) from Mus musculus (Mouse).